Consider the following 295-residue polypeptide: Indole-3-glycerol phosphate synthase (295 aa).

It belongs to the TrpC family.

It catalyses the reaction 1-(2-carboxyphenylamino)-1-deoxy-D-ribulose 5-phosphate + H(+) = (1S,2R)-1-C-(indol-3-yl)glycerol 3-phosphate + CO2 + H2O. The protein operates within amino-acid biosynthesis; L-tryptophan biosynthesis; L-tryptophan from chorismate: step 4/5. This chain is Indole-3-glycerol phosphate synthase, found in Prochlorococcus marinus subsp. pastoris (strain CCMP1986 / NIES-2087 / MED4).